The primary structure comprises 552 residues: Two-component response regulator ARR10 (552 aa).

The Response regulatory domain maps to R18–V133. D69 carries the post-translational modification 4-aspartylphosphate. The segment at K139–Q181 is disordered. Positions N151–N173 form a coiled coil. Acidic residues predominate over residues Y163–D177. Residues K182–R185 carry the Nuclear localization signal motif. The segment at residues R185–R235 is a DNA-binding region (myb-like GARP).

It belongs to the ARR family. Type-B subfamily. Binds the target DNA as a monomer. In terms of processing, two-component system major event consists of a His-to-Asp phosphorelay between a sensor histidine kinase (HK) and a response regulator (RR). In plants, the His-to-Asp phosphorelay involves an additional intermediate named Histidine-containing phosphotransfer protein (HPt). This multistep phosphorelay consists of a His-Asp-His-Asp sequential transfer of a phosphate group between first a His and an Asp of the HK protein, followed by the transfer to a conserved His of the HPt protein and finally the transfer to an Asp in the receiver domain of the RR protein. Detected in the whole plant. Predominantly expressed in roots and leaves.

The protein resides in the nucleus. Its function is as follows. Transcriptional activator that binds specifically to the DNA sequence 5'-[AG]GATT-3'. Functions as a response regulator involved in His-to-Asp phosphorelay signal transduction system. Phosphorylation of the Asp residue in the receiver domain activates the ability of the protein to promote the transcription of target genes. Could directly activate some type-A response regulators in response to cytokinins. In Arabidopsis thaliana (Mouse-ear cress), this protein is Two-component response regulator ARR10 (ARR10).